We begin with the raw amino-acid sequence, 194 residues long: MNTKKNELPAPDATRISRTLSYLLRHAPQTIGLQLDPEGWADIDELIAGIARQGLHLDRATLETVCATNDKQRFALSDDGRRIRAVQGHSTPVVQRRYPAAQPPERLYHGTATRFLDSIRAQGLKPGARHHVHLSPDIRTALAVGTRYGVPVILEVDAQRMHRQGHTFFVAENGVWLTDTVPAEFLKEMDQPAR.

It belongs to the KptA/TPT1 family.

Functionally, removes the 2'-phosphate from RNA via an intermediate in which the phosphate is ADP-ribosylated by NAD followed by a presumed transesterification to release the RNA and generate ADP-ribose 1''-2''-cyclic phosphate (APPR&gt;P). May function as an ADP-ribosylase. The sequence is that of Probable RNA 2'-phosphotransferase from Burkholderia lata (strain ATCC 17760 / DSM 23089 / LMG 22485 / NCIMB 9086 / R18194 / 383).